Consider the following 378-residue polypeptide: C-type lectin domain family 17, member A (378 aa).

The segment at 1–119 (MHNLYSITGY…PPLPCKPRNM (119 aa)) is disordered. Over 1–172 (MHNLYSITGY…GCCQKRWMVY (172 aa)) the chain is Cytoplasmic. Composition is skewed to acidic residues over residues 17–27 (MEEEEEDDDYE), 43–53 (MEEEEEDDDYE), and 69–79 (MEEEEEDDDYE). Positions 86–101 (KDLPPKPGSSAPPRPP) are enriched in pro residues. Residues 173–193 (LCLLVVTSLFLGCLGLTVTLI) traverse the membrane as a helical; Signal-anchor for type II membrane protein segment. At 194–378 (KYQELMEELR…YWICERKCSC (185 aa)) the chain is on the extracellular side. N-linked (GlcNAc...) asparagine glycosylation is found at N215 and N237. Intrachain disulfides connect C254–C265, C282–C372, and C350–C364. The C-type lectin domain maps to 261-373 (FEGKCYYFSP…CYKTTYWICE (113 aa)). N285 is a glycosylation site (N-linked (GlcNAc...) asparagine). Ca(2+) contacts are provided by E341, N343, E348, N360, and D361.

As to quaternary structure, oligomer; disulfide-linked. In terms of processing, phosphorylated on tyrosine residues. Expressed on dividing B-cells of germinal centers in various tissues, including lymph nodes, tonsils, stomach, intestine, appendix and spleen.

The protein localises to the membrane. Cell surface receptor which may be involved in carbohydrate-mediated communication between cells in the germinal center. Binds glycans with terminal alpha-linked mannose or fucose residues. The polypeptide is C-type lectin domain family 17, member A (CLEC17A) (Homo sapiens (Human)).